A 397-amino-acid chain; its full sequence is Enoyl-[acyl-carrier-protein] reductase [NADH] (397 aa).

NAD(+)-binding positions include 48 to 53, 74 to 75, 111 to 112, and 139 to 140; these read GASTGY, FE, DA, and VA. Y225 contributes to the substrate binding site. Y235 functions as the Proton donor in the catalytic mechanism. Residues K244 and 273-275 contribute to the NAD(+) site; that span reads VVT.

This sequence belongs to the TER reductase family. Monomer.

The catalysed reaction is a 2,3-saturated acyl-[ACP] + NAD(+) = a (2E)-enoyl-[ACP] + NADH + H(+). Its pathway is lipid metabolism; fatty acid biosynthesis. Its function is as follows. Involved in the final reduction of the elongation cycle of fatty acid synthesis (FAS II). Catalyzes the reduction of a carbon-carbon double bond in an enoyl moiety that is covalently linked to an acyl carrier protein (ACP). The sequence is that of Enoyl-[acyl-carrier-protein] reductase [NADH] from Burkholderia pseudomallei (strain 668).